The sequence spans 580 residues: Jasmonoyl--L-amino acid synthetase JAR6 (580 aa).

Position 100 (Ser100) interacts with ATP. Ser103 provides a ligand contact to jasmonate. Residues Met120, Thr123, Gly164, Asn169, and 332 to 337 contribute to the ATP site; that span reads GSSEGW. Position 167–171 (167–171) interacts with an L-alpha-amino acid; it reads TTNVY. Residue 329 to 332 coordinates jasmonate; sequence ADYG. 534–538 serves as a coordination point for an L-alpha-amino acid; it reads KILDH.

The protein belongs to the IAA-amido conjugating enzyme family.

The catalysed reaction is a jasmonate + an L-alpha-amino acid + ATP = a jasmonyl-L-amino acid + AMP + diphosphate + H(+). In terms of biological role, catalyzes the synthesis of jasmonate-amino acid conjugates by adenylation. Catalyzes the conjugation of jasmonate (JA) to Ile, Leu and Val. Catalyzes the conjugation of JA to Ile that may mediate defense signaling and resistance to the herbivore Manduca sexta caterpillars. The polypeptide is Jasmonoyl--L-amino acid synthetase JAR6 (JAR6) (Nicotiana attenuata (Coyote tobacco)).